The sequence spans 1085 residues: Translation factor GUF1 homolog, mitochondrial (1085 aa).

The region spanning 232-409 (KYIRNFCILA…RIISDIPPPI (178 aa)) is the tr-type G domain. GTP contacts are provided by residues 241–248 (AHIDSGKS), 302–306 (DTPGH), and 356–359 (NKID).

Belongs to the TRAFAC class translation factor GTPase superfamily. Classic translation factor GTPase family. LepA subfamily.

It is found in the mitochondrion inner membrane. The catalysed reaction is GTP + H2O = GDP + phosphate + H(+). Functionally, promotes mitochondrial protein synthesis. May act as a fidelity factor of the translation reaction, by catalyzing a one-codon backward translocation of tRNAs on improperly translocated ribosomes. Binds to mitochondrial ribosomes in a GTP-dependent manner. In Plasmodium falciparum (isolate 3D7), this protein is Translation factor GUF1 homolog, mitochondrial.